A 610-amino-acid polypeptide reads, in one-letter code: Glutamine--fructose-6-phosphate aminotransferase [isomerizing] (610 aa).

Cysteine 2 functions as the Nucleophile; for GATase activity in the catalytic mechanism. The region spanning 2 to 218 is the Glutamine amidotransferase type-2 domain; sequence CGIVGAVAQR…EGDVAEITRR (217 aa). SIS domains are found at residues 286–426 and 459–600; these read AAEI…QQGR and LATD…VDQP. Lysine 605 acts as the For Fru-6P isomerization activity in catalysis.

As to quaternary structure, homodimer.

It localises to the cytoplasm. The enzyme catalyses D-fructose 6-phosphate + L-glutamine = D-glucosamine 6-phosphate + L-glutamate. Catalyzes the first step in hexosamine metabolism, converting fructose-6P into glucosamine-6P using glutamine as a nitrogen source. This is Glutamine--fructose-6-phosphate aminotransferase [isomerizing] from Vibrio vulnificus (strain CMCP6).